Here is a 352-residue protein sequence, read N- to C-terminus: MSGTDKVRVNVSQTAQTPLHTSAKLPKVGVLLVNLGTPDGTSYGPMRRYLAEFLSDRRVIEWSRLIWYPILYGIVLNTRPRRSGRLYDRIWNHENNESPLRTYTRAQGEKLAKALSDQPNVVVDWAMRYGQPSIESITDRLLQQGCERIVIFPLYPQYSATTTATVNDKFFEALMKKRFMPAIRTVPSYEAEPVYIDALARSVEKHLATLSFKPEVILTSYHGIPKSYSDKGDPYRQQCLETTRLLRERLGLGEDEMRATFQSRFGPEEWLQPYTDETVKELAKNGVKLVAVLNPGFVADCLETVDEIGNEAAEEFLENGGENFSHIPCLNDSEEGMKVIETLVRRELLGWV.

2 residues coordinate Fe cation: His222 and Glu303.

It belongs to the ferrochelatase family.

Its subcellular location is the cytoplasm. It catalyses the reaction heme b + 2 H(+) = protoporphyrin IX + Fe(2+). Its pathway is porphyrin-containing compound metabolism; protoheme biosynthesis; protoheme from protoporphyrin-IX: step 1/1. Functionally, catalyzes the ferrous insertion into protoporphyrin IX. In Brucella abortus (strain S19), this protein is Ferrochelatase.